The primary structure comprises 515 residues: MDEFHRYGKEDNSRQQCFLYPLFFQEDLYAISHDHYLDGSSSSEPMEHLSSNDQFSFLTVKRLIGQIRQQNHSIVLFVNCAPNPLADCKKSSYSESVLEGLTLVLEVPFSIRSKYSVEGMNEWKSFRSIHSIFPFLEDKFPHSNYISDARIPYSIHPEILVRTFRRLIRDAPSLHPLRSVLYEYRNSPENLQRSIIVVPRVNTRFFLFLWNYYVYECESILFSLLKRSSHSRSLAHRPFPHGTHFHRKIKHIIIFSRRNSLKSIWLLKDPKINYVRYGERSIIAIKGTHLLVKKCRYYLLLFRQCYFHLWSEPYRVCSHQLSKNCSSSLGYFLRVRMNPLFVRTKMLDELFIADLITNEFDPIVPIVPILGLLAREKFCDVSGRPISKLSWTNLTDDDILNRFDQIWRNLFHYYSGSFGRDGLYRIKYILSLSCAKTLACKHKSTIRVVRKELGPELLSKIVFKRTRFDSLPFSSKAAARSQRERIWHSDIPQINPLVNSWQKIQDLKIENLFDQ.

It belongs to the intron maturase 2 family. MatK subfamily.

It is found in the plastid. The protein localises to the chloroplast. Its function is as follows. Usually encoded in the trnK tRNA gene intron. Probably assists in splicing its own and other chloroplast group II introns. The polypeptide is Maturase K (Pinus cembra (Swiss stone pine)).